The sequence spans 105 residues: Large ribosomal subunit protein uL24 (105 aa).

This sequence belongs to the universal ribosomal protein uL24 family. Part of the 50S ribosomal subunit.

In terms of biological role, one of two assembly initiator proteins, it binds directly to the 5'-end of the 23S rRNA, where it nucleates assembly of the 50S subunit. One of the proteins that surrounds the polypeptide exit tunnel on the outside of the subunit. The sequence is that of Large ribosomal subunit protein uL24 from Sphingopyxis alaskensis (strain DSM 13593 / LMG 18877 / RB2256) (Sphingomonas alaskensis).